A 198-amino-acid polypeptide reads, in one-letter code: ATP-dependent Clp protease proteolytic subunit (198 aa).

Ser101 functions as the Nucleophile in the catalytic mechanism. His126 is an active-site residue.

Belongs to the peptidase S14 family. In terms of assembly, component of the chloroplastic Clp protease core complex.

Its subcellular location is the plastid. It is found in the chloroplast stroma. The catalysed reaction is Hydrolysis of proteins to small peptides in the presence of ATP and magnesium. alpha-casein is the usual test substrate. In the absence of ATP, only oligopeptides shorter than five residues are hydrolyzed (such as succinyl-Leu-Tyr-|-NHMec, and Leu-Tyr-Leu-|-Tyr-Trp, in which cleavage of the -Tyr-|-Leu- and -Tyr-|-Trp bonds also occurs).. Functionally, cleaves peptides in various proteins in a process that requires ATP hydrolysis. Has a chymotrypsin-like activity. Plays a major role in the degradation of misfolded proteins. This chain is ATP-dependent Clp protease proteolytic subunit, found in Solanum bulbocastanum (Wild potato).